A 39-amino-acid polypeptide reads, in one-letter code: Photosystem II reaction center protein J (39 aa).

A helical membrane pass occupies residues 9 to 29 (LWLVGLVGGFAVITIVSLFIY).

The protein belongs to the PsbJ family. In terms of assembly, PSII is composed of 1 copy each of membrane proteins PsbA, PsbB, PsbC, PsbD, PsbE, PsbF, PsbH, PsbI, PsbJ, PsbK, PsbL, PsbM, PsbT, PsbX, PsbY, PsbZ, Psb30/Ycf12, at least 3 peripheral proteins of the oxygen-evolving complex and a large number of cofactors. It forms dimeric complexes.

Its subcellular location is the plastid. The protein localises to the chloroplast thylakoid membrane. In terms of biological role, one of the components of the core complex of photosystem II (PSII). PSII is a light-driven water:plastoquinone oxidoreductase that uses light energy to abstract electrons from H(2)O, generating O(2) and a proton gradient subsequently used for ATP formation. It consists of a core antenna complex that captures photons, and an electron transfer chain that converts photonic excitation into a charge separation. This Thalassiosira pseudonana (Marine diatom) protein is Photosystem II reaction center protein J.